The sequence spans 674 residues: MESSPSSPQPTQSDPLAVFPQRTLEPADIAVLVLYFLFVLAVGLWSTVKTRRDTVKGYFLAGGDMVWWPVGASLFASNVGSGHFVGLAGSGAAAGLSVTAYEFNGIFSVLMLAWIFLPIYIAGQVTTMPEYLRKRFGGSRIPITLAVLYLFIYIFTKISVDMYAGAIFIQQSLHLNLYLAIVGLLAITALYTIAGGLAAVIYTDALQTLIMLIGALTLMGYSFAAVGGMEGLKEKYFLALASNRSGNSSCGLPREDAFHIFRDPLTSDLPWPGILFGMSIPSLWYWCTDQVIVQRTLAAKNLSHAKGGSLMAAYLKVLPLFIMVFPGMVSRVLFPDQVACADPEICQKVCSNPAGCSDIAYPKLVLELLPMGLRGLMMAVMVAALMSSLTSIFNSASTIFTMDLWNHLRPRASERELMIVGRVFVLLLVLVSILWIPVVQASQGGQLFIYIQSISSYLQPPVAVVFIMGCFWKRTNEKGAFSGLILGLLLGLVRLVLDFIYPQPRCDQPDERPAVVRDVHYLYFSMILSSVTLVTVSTVSWCTAPPTQEMVSRLTWFTRHDPIVLKEQVPSATPVPVTVSQNGTPEASSTNIQFEIVQENTSKTHSCDMTKKQSKVVKTILWLCGMESKGKEEPPSRADPVIVSLEEIPLVKTLLDINLIVCISCAIFLWGYFA.

Over 1 to 27 (MESSPSSPQPTQSDPLAVFPQRTLEPA) the chain is Extracellular. Residues 28–48 (DIAVLVLYFLFVLAVGLWSTV) form a helical membrane-spanning segment. Topologically, residues 49 to 56 (KTRRDTVK) are cytoplasmic. A helical transmembrane segment spans residues 57–77 (GYFLAGGDMVWWPVGASLFAS). Topologically, residues 78-102 (NVGSGHFVGLAGSGAAAGLSVTAYE) are extracellular. A helical membrane pass occupies residues 103–123 (FNGIFSVLMLAWIFLPIYIAG). At 124 to 140 (QVTTMPEYLRKRFGGSR) the chain is on the cytoplasmic side. The chain crosses the membrane as a helical span at residues 141 to 161 (IPITLAVLYLFIYIFTKISVD). Residues 162–180 (MYAGAIFIQQSLHLNLYLA) lie on the Extracellular side of the membrane. Residues 181 to 201 (IVGLLAITALYTIAGGLAAVI) traverse the membrane as a helical segment. Over 202–208 (YTDALQT) the chain is Cytoplasmic. A helical transmembrane segment spans residues 209-229 (LIMLIGALTLMGYSFAAVGGM). At 230–272 (EGLKEKYFLALASNRSGNSSCGLPREDAFHIFRDPLTSDLPWP) the chain is on the extracellular side. Residues 273 to 293 (GILFGMSIPSLWYWCTDQVIV) traverse the membrane as a helical segment. Residues 294–308 (QRTLAAKNLSHAKGG) lie on the Cytoplasmic side of the membrane. A helical transmembrane segment spans residues 309 to 329 (SLMAAYLKVLPLFIMVFPGMV). The Extracellular portion of the chain corresponds to 330–374 (SRVLFPDQVACADPEICQKVCSNPAGCSDIAYPKLVLELLPMGLR). The helical transmembrane segment at 375–397 (GLMMAVMVAALMSSLTSIFNSAS) threads the bilayer. The Cytoplasmic portion of the chain corresponds to 398 to 418 (TIFTMDLWNHLRPRASERELM). The helical transmembrane segment at 419-439 (IVGRVFVLLLVLVSILWIPVV) threads the bilayer. Residues 440–446 (QASQGGQ) are Extracellular-facing. A helical membrane pass occupies residues 447-467 (LFIYIQSISSYLQPPVAVVFI). The Cytoplasmic portion of the chain corresponds to 468-479 (MGCFWKRTNEKG). A helical membrane pass occupies residues 480-500 (AFSGLILGLLLGLVRLVLDFI). Over 501–518 (YPQPRCDQPDERPAVVRD) the chain is Extracellular. Residues 519–539 (VHYLYFSMILSSVTLVTVSTV) form a helical membrane-spanning segment. Residues 540–653 (SWCTAPPTQE…SLEEIPLVKT (114 aa)) are Cytoplasmic-facing. Residues 654–674 (LLDINLIVCISCAIFLWGYFA) form a helical membrane-spanning segment.

This sequence belongs to the sodium:solute symporter (SSF) (TC 2.A.21) family.

Its subcellular location is the membrane. It localises to the apical cell membrane. It carries out the reaction myo-inositol(out) + 2 Na(+)(out) = myo-inositol(in) + 2 Na(+)(in). The enzyme catalyses 1D-chiro-inositol(out) + 2 Na(+)(out) = 1D-chiro-inositol(in) + 2 Na(+)(in). The catalysed reaction is D-glucose(out) + 2 Na(+)(out) = D-glucose(in) + 2 Na(+)(in). It catalyses the reaction D-xylose(out) + 2 Na(+)(out) = D-xylose(in) + 2 Na(+)(in). Its activity is regulated as follows. MI transport activity inhibited by D-chiro-inositol (DCI), phlorizin (Pz) and sodium (Na(+)). Insulin increases D-chiro-inositol uptake. In terms of biological role, involved in the sodium-dependent cotransport of myo-inositol (MI) with a Na(+):MI stoichiometry of 2:1. Exclusively responsible for apical MI transport and absorption in intestine. Can also transport D-chiro-inositol (DCI) but not L-fucose. Exhibits stereospecific cotransport of both D-glucose and D-xylose. May induce apoptosis through the TNF-alpha, PDCD1 pathway. May play a role in the regulation of MI concentration in serum, involving reabsorption in at least the proximal tubule of the kidney. The protein is Sodium/myo-inositol cotransporter 2 of Sus scrofa (Pig).